The primary structure comprises 1241 residues: ATP-dependent helicase/nuclease subunit A (1241 aa).

The 474-residue stretch at 12-485 (SQWTDDQWKA…IDLAKNFRSR (474 aa)) folds into the UvrD-like helicase ATP-binding domain. Residue 33–40 (AAAGSGKT) participates in ATP binding. The 301-residue stretch at 505–805 (GEIDYDADAE…RIMTIHKSKG (301 aa)) folds into the UvrD-like helicase C-terminal domain.

It belongs to the helicase family. AddA subfamily. In terms of assembly, heterodimer of AddA and AddB/RexB. Mg(2+) is required as a cofactor.

The enzyme catalyses Couples ATP hydrolysis with the unwinding of duplex DNA by translocating in the 3'-5' direction.. It carries out the reaction ATP + H2O = ADP + phosphate + H(+). In terms of biological role, the heterodimer acts as both an ATP-dependent DNA helicase and an ATP-dependent, dual-direction single-stranded exonuclease. Recognizes the chi site generating a DNA molecule suitable for the initiation of homologous recombination. The AddA nuclease domain is required for chi fragment generation; this subunit has the helicase and 3' -&gt; 5' nuclease activities. In Bacillus thuringiensis subsp. konkukian (strain 97-27), this protein is ATP-dependent helicase/nuclease subunit A.